The primary structure comprises 1019 residues: Serine/threonine-protein kinase 31 (1019 aa).

The Tudor domain occupies asparagine 78–serine 137. Residues glutamate 298–threonine 355 are a coiled coil. The Protein kinase domain occupies isoleucine 710 to cysteine 1019. ATP contacts are provided by residues methionine 716–methionine 724 and lysine 737.

The protein belongs to the protein kinase superfamily. Ser/Thr protein kinase family. Testis specific.

The catalysed reaction is L-seryl-[protein] + ATP = O-phospho-L-seryl-[protein] + ADP + H(+). It catalyses the reaction L-threonyl-[protein] + ATP = O-phospho-L-threonyl-[protein] + ADP + H(+). The protein is Serine/threonine-protein kinase 31 (STK31) of Homo sapiens (Human).